The sequence spans 658 residues: Threonine--tRNA ligase (658 aa).

The region spanning 1–61 (MSDVRVIIQR…KDGEEVEPVQ (61 aa)) is the TGS domain. Residues 259–554 (DHRKLGNELD…LLEHYAGAFP (296 aa)) form a catalytic region. Zn(2+)-binding residues include Cys-353, His-404, and His-531.

It belongs to the class-II aminoacyl-tRNA synthetase family. As to quaternary structure, homodimer. The cofactor is Zn(2+).

It is found in the cytoplasm. It carries out the reaction tRNA(Thr) + L-threonine + ATP = L-threonyl-tRNA(Thr) + AMP + diphosphate + H(+). In terms of biological role, catalyzes the attachment of threonine to tRNA(Thr) in a two-step reaction: L-threonine is first activated by ATP to form Thr-AMP and then transferred to the acceptor end of tRNA(Thr). Also edits incorrectly charged L-seryl-tRNA(Thr). This chain is Threonine--tRNA ligase, found in Streptomyces avermitilis (strain ATCC 31267 / DSM 46492 / JCM 5070 / NBRC 14893 / NCIMB 12804 / NRRL 8165 / MA-4680).